A 392-amino-acid polypeptide reads, in one-letter code: MCDFVFRYDSHIENKLSKYIKTTNGKTLLQVSNNKFITIKIGSSYGKKYISVSFNDSICFMNFIVGKRIHCQTNTISNCECCTNYTCYCKYIFQNRCIEHIKIFIAKYLPMIREISNHKFKLIDLIKVDTINNNPTVFNSIKLIKFDTNNDLIFNNDLILLIFEYGFFEDTIDVVKILLDSIQHVTFEFIDTLINIFKKNINGKDRKYFMDKIKSHTFNLSLMDFIKPVLSTDNVDLFYYVIDELTTIVGQIFCDNDTSECDNIDKLDTKFKYDSSKSIKIINHLVSISFYCPKIFKQLLIDINNIDLISDIINKLVFYNYIEYVVIIFDYLGSNIQKFIDEIFLYATSIDMIDLLIDYGADYEKIYRNRKFHKLREDIIVHIKKLIKSNKN.

It belongs to the mimivirus L17x/L18x family.

This is an uncharacterized protein from Acanthamoeba polyphaga (Amoeba).